Reading from the N-terminus, the 630-residue chain is Prolactin receptor (630 aa).

Positions 1–23 (MMTKVGEVLLLLLLPAFVPHTDG) are cleaved as a signal peptide. Topologically, residues 24–234 (THYSLPGKPT…VKVPEYLHRE (211 aa)) are extracellular. Fibronectin type-III domains are found at residues 31 to 128 (KPTE…IVQP) and 130 to 230 (PPEK…VPEY). 2 disulfides stabilise this stretch: C37-C47 and C76-C87. Residues N92 and N101 are each glycosylated (N-linked (GlcNAc...) asparagine). Zn(2+) contacts are provided by D212 and H213. The short motif at 216–220 (WSEWS) is the WSXWS motif element. Residues 235–258 (KSVWILVLVFSAFILLLLTWLIHM) form a helical membrane-spanning segment. The Cytoplasmic portion of the chain corresponds to 259–630 (NSHSLKHCML…DTATVFSVHT (372 aa)). The Box 1 motif signature appears at 267–275 (MLPPVPGPK). Residues 339 to 389 (KSIGSASDSDSGRGSCDSDNLLMDKSGAPKEEQQQQNQEGDQIGKETQGPK) are disordered. A compositionally biased stretch (low complexity) spans 340-357 (SIGSASDSDSGRGSCDSD). A compositionally biased stretch (basic and acidic residues) spans 380–389 (QIGKETQGPK).

This sequence belongs to the type I cytokine receptor family. Type 1 subfamily.

It localises to the membrane. This is a receptor for the anterior pituitary hormone prolactin. This Oreochromis niloticus (Nile tilapia) protein is Prolactin receptor (prlr).